The sequence spans 416 residues: Nuclear hormone receptor family member nhr-67 (416 aa).

Positions 18–98 (DVDCRVCEDH…IGMNKDAVQH (81 aa)) form a DNA-binding region, nuclear receptor. NR C4-type zinc fingers lie at residues 21-41 (CRVC…CDGC) and 57-86 (CKNK…LRKC). Residues 331–398 (KTETEEGEDI…SSRPRHSIRS (68 aa)) are disordered. The segment covering 335–346 (EEGEDIEEEDDA) has biased composition (acidic residues). Positions 377-390 (SSTQPSSASSPSSS) are enriched in low complexity.

The protein belongs to the nuclear hormone receptor family. Expressed in linker cell.

Its subcellular location is the nucleus. Functionally, orphan nuclear receptor that binds DNA containing an extended core motif half-site sequence 5'-AAGTCA-3'. In males, plays an essential role in the migration of the linker cell which guides gonad elongation during the L3 and L4 stages of larval development by negatively regulating the expression of netrin receptor unc-5 at the mid-L3 stage. Involved in the regulation of non-apoptotic cell death in the linker cell, acting upstream of or in parallel to transcription factor hsf-1. Represses hypoxia response genes, fmo-2 and acs-2, in both normoxic and hypoxic conditions, probably acting via repression of nuclear receptor nhr-49. In Caenorhabditis elegans, this protein is Nuclear hormone receptor family member nhr-67 (nhr-67).